A 283-amino-acid chain; its full sequence is Bifunctional protein FolD (283 aa).

An NADP(+)-binding site is contributed by 166-168 (GAS).

This sequence belongs to the tetrahydrofolate dehydrogenase/cyclohydrolase family. Homodimer.

It catalyses the reaction (6R)-5,10-methylene-5,6,7,8-tetrahydrofolate + NADP(+) = (6R)-5,10-methenyltetrahydrofolate + NADPH. It carries out the reaction (6R)-5,10-methenyltetrahydrofolate + H2O = (6R)-10-formyltetrahydrofolate + H(+). It participates in one-carbon metabolism; tetrahydrofolate interconversion. Its function is as follows. Catalyzes the oxidation of 5,10-methylenetetrahydrofolate to 5,10-methenyltetrahydrofolate and then the hydrolysis of 5,10-methenyltetrahydrofolate to 10-formyltetrahydrofolate. This is Bifunctional protein FolD from Coxiella burnetii (strain CbuG_Q212) (Coxiella burnetii (strain Q212)).